The following is a 252-amino-acid chain: 5'-nucleotidase SurE (252 aa).

Residues D8, D9, S42, and N94 each contribute to the a divalent metal cation site.

Belongs to the SurE nucleotidase family. A divalent metal cation is required as a cofactor.

The protein localises to the cytoplasm. It catalyses the reaction a ribonucleoside 5'-phosphate + H2O = a ribonucleoside + phosphate. Functionally, nucleotidase that shows phosphatase activity on nucleoside 5'-monophosphates. The polypeptide is 5'-nucleotidase SurE (Ehrlichia ruminantium (strain Gardel)).